Here is a 245-residue protein sequence, read N- to C-terminus: 14-3-3 protein zeta/delta (245 aa).

Position 1 is an N-acetylmethionine (methionine 1). Lysine 3 is subject to N6-acetyllysine. Residue serine 58 is modified to Phosphoserine; by PKA. An N6-acetyllysine modification is found at lysine 68. 3 positions are modified to phosphoserine: serine 184, serine 207, and serine 210. Residue threonine 232 is modified to Phosphothreonine; by CK1.

It belongs to the 14-3-3 family. Interacts with CDK16 and BSPRY. Interacts with WEE1 (C-terminal). Interacts with SAMSN1. Interacts with MLF1 (phosphorylated form); the interaction retains it in the cytoplasm. Interacts with Thr-phosphorylated ITGB2. Interacts with BCL2L11. Homodimer. Heterodimerizes with YWHAE. Homo- and heterodimerization is inhibited by phosphorylation on Ser-58. Interacts with FOXO4, NOXA1, SSH1 and ARHGEF2. Interacts with Pseudomonas aeruginosa exoS (unphosphorylated form). Interacts with BAX; the interaction occurs in the cytoplasm. Under stress conditions, MAPK8-mediated phosphorylation releases BAX to mitochondria. Interacts with phosphorylated RAF1; the interaction is inhibited when YWHAZ is phosphorylated on Thr-232. Interacts with TP53; the interaction enhances p53 transcriptional activity. The Ser-58 phosphorylated form inhibits this interaction and p53 transcriptional activity. Interacts with ABL1 (phosphorylated form); the interaction retains ABL1 in the cytoplasm. Interacts with PKA-phosphorylated AANAT; the interaction modulates AANAT enzymatic activity by increasing affinity for arylalkylamines and acetyl-CoA and protecting the enzyme from dephosphorylation and proteasomal degradation. It may also prevent thiol-dependent inactivation. Interacts with AKT1; the interaction phosphorylates YWHAZ and modulates dimerization. Interacts with GAB2 and TLK2. Interacts with the 'Thr-369' phosphorylated form of DAPK2. Interacts with PI4KB, TBC1D22A and TBC1D22B. Interacts with ZFP36L1 (via phosphorylated form); this interaction occurs in a p38 MAPK- and AKT-signaling pathways. Interacts with SLITRK1. Interacts with AK5, LDB1, MADD, MARK3, PDE1A and SMARCB1. Interacts with YWHAZ. Interacts with MEFV. Interacts with ADAM22 (via C-terminus). In terms of processing, the delta, brain-specific form differs from the zeta form in being phosphorylated. Phosphorylation on Ser-184 by MAPK8; promotes dissociation of BAX and translocation of BAX to mitochondria. Phosphorylation on Thr-232; inhibits binding of RAF1. Phosphorylated on Ser-58 by PKA and protein kinase C delta type catalytic subunit in a sphingosine-dependent fashion. Phosphorylation on Ser-58 by PKA; disrupts homodimerization and heterodimerization with YHAE and TP53. In terms of tissue distribution, highly expressed in brain (at protein level).

The protein localises to the cytoplasm. The protein resides in the melanosome. Functionally, adapter protein implicated in the regulation of a large spectrum of both general and specialized signaling pathways. Binds to a large number of partners, usually by recognition of a phosphoserine or phosphothreonine motif. Binding generally results in the modulation of the activity of the binding partner. Promotes cytosolic retention and inactivation of TFEB transcription factor by binding to phosphorylated TFEB. Induces ARHGEF7 activity on RAC1 as well as lamellipodia and membrane ruffle formation. In neurons, regulates spine maturation through the modulation of ARHGEF7 activity. The protein is 14-3-3 protein zeta/delta (YWHAZ) of Ovis aries (Sheep).